Consider the following 395-residue polypeptide: Elongation factor Tu (395 aa).

The tr-type G domain maps to 10-204 (KTHANIGTIG…AVDSYIPTPE (195 aa)). Residues 19–26 (GHVDHGKT) are G1. 19–26 (GHVDHGKT) contacts GTP. Mg(2+) is bound at residue T26. The interval 60 to 64 (GITIN) is G2. Residues 81–84 (DCPG) form a G3 region. Residues 81 to 85 (DCPGH) and 136 to 139 (NKCD) each bind GTP. The interval 136-139 (NKCD) is G4. The interval 174–176 (SAL) is G5.

Belongs to the TRAFAC class translation factor GTPase superfamily. Classic translation factor GTPase family. EF-Tu/EF-1A subfamily. In terms of assembly, monomer.

It is found in the cytoplasm. The catalysed reaction is GTP + H2O = GDP + phosphate + H(+). In terms of biological role, GTP hydrolase that promotes the GTP-dependent binding of aminoacyl-tRNA to the A-site of ribosomes during protein biosynthesis. In Lysinibacillus sphaericus (strain C3-41), this protein is Elongation factor Tu.